Reading from the N-terminus, the 222-residue chain is MGLPFIVLNYKTYLQGTGQGAMEIAKACKAVSEESGVEIAVAPQLPDIYRVASEVALPVFSQHLDGIGAGSFTGHVFGKCIKEAGAVGTLINHSEKRLTLAEIEASLKAAKEFGLRSIICTNNVPTTAAAAVLGPDYVAIEPPELIGSGIPVSKADPEVVSGSVEAVAKINPRVKVLCGAGISKGEDLRAALDLGSQGVLLASGIVKATDPKAALEDLIRLI.

9 to 11 (NYK) lines the substrate pocket. The active-site Electrophile is histidine 93. The Proton acceptor role is filled by glutamate 141. Residues isoleucine 146, glycine 181, and 202-203 (AS) each bind substrate.

It belongs to the triosephosphate isomerase family. As to quaternary structure, homotetramer; dimer of dimers.

It is found in the cytoplasm. The catalysed reaction is D-glyceraldehyde 3-phosphate = dihydroxyacetone phosphate. It participates in carbohydrate biosynthesis; gluconeogenesis. The protein operates within carbohydrate degradation; glycolysis; D-glyceraldehyde 3-phosphate from glycerone phosphate: step 1/1. Involved in the gluconeogenesis. Catalyzes stereospecifically the conversion of dihydroxyacetone phosphate (DHAP) to D-glyceraldehyde-3-phosphate (G3P). The polypeptide is Triosephosphate isomerase (Methanosarcina barkeri (strain Fusaro / DSM 804)).